The following is a 329-amino-acid chain: Biotin synthase (329 aa).

Residues Asn38 to Ser262 form the Radical SAM core domain. [4Fe-4S] cluster contacts are provided by Cys53, Cys57, and Cys60. Cys97, Cys128, Cys188, and Arg260 together coordinate [2Fe-2S] cluster.

It belongs to the radical SAM superfamily. Biotin synthase family. In terms of assembly, homodimer. [4Fe-4S] cluster is required as a cofactor. It depends on [2Fe-2S] cluster as a cofactor.

The enzyme catalyses (4R,5S)-dethiobiotin + (sulfur carrier)-SH + 2 reduced [2Fe-2S]-[ferredoxin] + 2 S-adenosyl-L-methionine = (sulfur carrier)-H + biotin + 2 5'-deoxyadenosine + 2 L-methionine + 2 oxidized [2Fe-2S]-[ferredoxin]. Its pathway is cofactor biosynthesis; biotin biosynthesis; biotin from 7,8-diaminononanoate: step 2/2. In terms of biological role, catalyzes the conversion of dethiobiotin (DTB) to biotin by the insertion of a sulfur atom into dethiobiotin via a radical-based mechanism. The polypeptide is Biotin synthase (Acinetobacter baumannii (strain ACICU)).